The sequence spans 79 residues: Putative membrane protein insertion efficiency factor (79 aa).

The protein belongs to the UPF0161 family.

Its subcellular location is the cell inner membrane. In terms of biological role, could be involved in insertion of integral membrane proteins into the membrane. This is Putative membrane protein insertion efficiency factor from Rippkaea orientalis (strain PCC 8801 / RF-1) (Cyanothece sp. (strain PCC 8801)).